The sequence spans 151 residues: MLKEFREFALKGNVVDMAVGIIIGGAFGALVNSLVNDLLMPPLGLLLKGVDFSNLFVVLKEGTPPGPYIALADAKTAGAVTLNYGLFVNALIGFLIMAFAVFLLVRSINRLRSLSEKSAAPAVAPQTKECPFCFSIIPLKAVRCPNCTSQL.

Helical transmembrane passes span 14 to 34 (VVDMAVGIIIGGAFGALVNSL) and 85 to 105 (GLFVNALIGFLIMAFAVFLLV).

The protein belongs to the MscL family. In terms of assembly, homopentamer.

Its subcellular location is the cell inner membrane. Functionally, channel that opens in response to stretch forces in the membrane lipid bilayer. May participate in the regulation of osmotic pressure changes within the cell. The sequence is that of Large-conductance mechanosensitive channel from Chlorobaculum tepidum (strain ATCC 49652 / DSM 12025 / NBRC 103806 / TLS) (Chlorobium tepidum).